Consider the following 220-residue polypeptide: 5-hmdU DNA kinase 1 (220 aa).

The protein belongs to the thymidylate kinase family. 5-hmdU DNA kinase subfamily.

The enzyme catalyses 5-hydroxymethyl-dUMP in DNA + ATP = 5-phosphomethyl-dUMP in DNA + ADP + H(+). In terms of biological role, phosphorylates 5-hydroxymethyluracil (5hmdU) into 5-phosphomethyl-2'-deoxyuridine (5- PmdU) on DNA as a step in the pathway leading to thymidine hypermodifications in the viral genome. The phosphate is added internally to the DNA polymer. As a final result of the pathway of hypermodification, 5-aminoethoxy-2'-deoxymethyluridine (5-NeOmdU) substitutes for about 40% of the thymidines in the viral DNA. These modifications probably prevent degradation of viral genome by the host restriction-modification antiviral defense system. This Salmonella phage ViI protein is 5-hmdU DNA kinase 1.